Here is a 129-residue protein sequence, read N- to C-terminus: Small ribosomal subunit protein uS11 (129 aa).

It belongs to the universal ribosomal protein uS11 family. As to quaternary structure, part of the 30S ribosomal subunit. Interacts with proteins S7 and S18. Binds to IF-3.

Located on the platform of the 30S subunit, it bridges several disparate RNA helices of the 16S rRNA. Forms part of the Shine-Dalgarno cleft in the 70S ribosome. This Methylobacterium sp. (strain 4-46) protein is Small ribosomal subunit protein uS11.